The chain runs to 122 residues: Large ribosomal subunit protein uL18 (122 aa).

This sequence belongs to the universal ribosomal protein uL18 family. In terms of assembly, part of the 50S ribosomal subunit; part of the 5S rRNA/L5/L18/L25 subcomplex. Contacts the 5S and 23S rRNAs.

In terms of biological role, this is one of the proteins that bind and probably mediate the attachment of the 5S RNA into the large ribosomal subunit, where it forms part of the central protuberance. In Desulfatibacillum aliphaticivorans, this protein is Large ribosomal subunit protein uL18.